Here is a 567-residue protein sequence, read N- to C-terminus: uncharacterized protein (567 aa).

Residues Met1 to Ser31 are Lumenal-facing. The helical transmembrane segment at Ser32 to Val52 threads the bilayer. Residues Gln53–Val64 are Cytoplasmic-facing. A helical transmembrane segment spans residues Ile65 to Ile85. At Gln86–Asn87 the chain is on the lumenal side. A helical membrane pass occupies residues Met88–Ser108. Residues Gly109 to Ala128 are Cytoplasmic-facing. A helical membrane pass occupies residues Phe129–Leu149. At Asn150–Val159 the chain is on the lumenal side. The helical transmembrane segment at Glu160–Phe180 threads the bilayer. The Cytoplasmic portion of the chain corresponds to Asn181–Lys188. The chain crosses the membrane as a helical span at residues Leu189–Glu209. At Thr210–Gly227 the chain is on the lumenal side. Residues Ile228–Ile248 traverse the membrane as a helical segment. At Thr249–Tyr277 the chain is on the cytoplasmic side. A helical transmembrane segment spans residues Phe278–Leu298. Over Lys299–Lys315 the chain is Lumenal. The chain crosses the membrane as a helical span at residues Tyr316–Phe338. The Cytoplasmic segment spans residues Thr339–Pro347. Residues Ile348 to Phe366 traverse the membrane as a helical segment. Topologically, residues Pro367–Gln392 are lumenal. A helical transmembrane segment spans residues Met393–Glu413. The Cytoplasmic portion of the chain corresponds to Gly414 to Thr424. The helical transmembrane segment at Leu425–Ile445 threads the bilayer. Over Leu446–Lys567 the chain is Lumenal. A Phosphoserine modification is found at Ser515.

Belongs to the monovalent cation:proton antiporter 1 (CPA1) transporter (TC 2.A.36) family.

The protein localises to the golgi apparatus membrane. This is an uncharacterized protein from Schizosaccharomyces pombe (strain 972 / ATCC 24843) (Fission yeast).